We begin with the raw amino-acid sequence, 381 residues long: 40-kDa huntingtin-associated protein (381 aa).

Ala2 is modified (N-acetylalanine). Positions 34-36 match the Nuclear localization signal motif; it reads KKR. The disordered stretch occupies residues 213–260; the sequence is EHGGHPVQQPELPQQLPSVPQPSLPGPQPRPVLGSTLPLPLPPDHAPG. Low complexity predominate over residues 218–230; sequence PVQQPELPQQLPS. The segment covering 231–242 has biased composition (pro residues); the sequence is VPQPSLPGPQPR.

Interacts with HTT (via C-terminus). Interacts with RAB5A. Found in a complex with F8A1/F8A2/F8A3, HTT and RAB5A; mediates the recruitment of HTT by RAB5A onto early endosomes.

Its subcellular location is the cytoplasm. It is found in the nucleus. It localises to the early endosome. The protein localises to the nuclear body. Functionally, RAB5A effector molecule that is involved in vesicular trafficking of early endosomes. Mediates the recruitment of HTT by RAB5A onto early endosomes. The HTT-F8A1/F8A2/F8A3-RAB5A complex stimulates early endosomal interaction with actin filaments and inhibits interaction with microtubules, leading to the reduction of endosome motility. This is 40-kDa huntingtin-associated protein (F8a1) from Rattus norvegicus (Rat).